The following is a 509-amino-acid chain: MTVTYTARVANARFGGFSQLLLLWRGSIYKLLWRELLCFLGFYMALSAAYRFVLTEGQKRYFEKLVIYCDQYASLIPVSFVLGFYVTLVVNRWWSQYLCMPLPDALMCVVAGTVHGRDDRGRLYRRTLMRYAGLSAVLILRSVSTAVFKRFPTIDHVVEAGFMTREERKKFENLNSSYNKYWVPCVWFSNLAAQARREGRIRDNSALKLLLEELNVFRGKCGMLFHYDWISVPLVYTQVVTIALYSYFLACLIGRQFLDPAQGYKDHDLDLCVPIFTLLQFFFYAGWLKVAEQLINPFGEDDDDFETNFLIDRNFQVSMLAVDEMYDDLAVLEKDLYWDAAEARAPYTAATVFQLRQPSFQGSTFDITLAKEDMQFQRLDGLDGPMGEAPGDFLQRLLPAGAGMVAGGPLGRRLSFLLRKNSCVSEASTGASCSCAVVPEGAAPECSCGDPLLDPGLPEPEAPPPAGPEPLTLIPGPVEPFSIVTMPGPRGPAPPWLPSPIGEEEENLA.

Over 1–31 the chain is Cytoplasmic; that stretch reads MTVTYTARVANARFGGFSQLLLLWRGSIYKL. Ala-10 serves as a coordination point for Ca(2+). Residues 32–51 traverse the membrane as a helical segment; the sequence is LWRELLCFLGFYMALSAAYR. At 52–60 the chain is on the extracellular side; the sequence is FVLTEGQKR. Residues 61-82 traverse the membrane as a helical segment; sequence YFEKLVIYCDQYASLIPVSFVL. At 83-238 the chain is on the cytoplasmic side; it reads GFYVTLVVNR…WISVPLVYTQ (156 aa). Residues 239–255 form a helical membrane-spanning segment; sequence VVTIALYSYFLACLIGR. Topologically, residues 256–274 are extracellular; sequence QFLDPAQGYKDHDLDLCVP. A helical transmembrane segment spans residues 275–288; it reads IFTLLQFFFYAGWL. Over 289-509 the chain is Cytoplasmic; that stretch reads KVAEQLINPF…PIGEEEENLA (221 aa). Ca(2+)-binding residues include Gln-293, Asn-296, Asp-301, and Asp-304. The segment at 454 to 509 is disordered; the sequence is DPGLPEPEAPPPAGPEPLTLIPGPVEPFSIVTMPGPRGPAPPWLPSPIGEEEENLA. Composition is skewed to pro residues over residues 457-468 and 489-498; these read LPEPEAPPPAGP and PRGPAPPWLP.

Belongs to the anion channel-forming bestrophin (TC 1.A.46) family. Calcium-sensitive chloride channel subfamily. Pentamer. Interacts with GLUL; this interaction tethers a fraction of GLUL to the membrane, causing a decrease of cytosolic glutamine synthase (GS) activity and inhibits the chloride channel activity of BEST2 by affecting the gating at the aperture in the absence of intracellular glutamate. In terms of tissue distribution, mainly confined to the retinal pigment epithelium. Expressed in colon.

Its subcellular location is the cell membrane. It is found in the basolateral cell membrane. It catalyses the reaction chloride(in) = chloride(out). The enzyme catalyses hydrogencarbonate(in) = hydrogencarbonate(out). It carries out the reaction L-glutamate(out) = L-glutamate(in). The catalysed reaction is iodide(out) = iodide(in). It catalyses the reaction L-glutamine(out) = L-glutamine(in). Chloride channel activity is allosterically inhibited by GLUL/glutamine synthase (GS) which affects the gating at the aperture in the absence of intracellular glutamate. Inhibitory effect of GLUL is relieved upon increasing of L-glutamate intracellular level. Ligand-gated anion channel that allows the movement of anions across cell membranes when activated by calcium (Ca2+). Transports a large specter of anions, namely mediates the movement of chloride, L-glutamate and iodide. Calcium-binding triggers the dilation of the aperture, but calcium-dependent gating is only effective when the size of the passing anion is bigger than the closed aperture. Mediates the calcium-activated hydrogencarbonate movement and participates in colonic hydrogencarbonate secretion concomitant with mucin secretion. In non-pigmented epithelium (NPE), mediates the efflux of intracellular L-glutamate; binding of intracellular L-glutamate activates and open both the neck and the aperture of the channel, leading to L-glutamate exit promoting chloride influx movement from the extracellular side in trans. Also exhibits a directional permeability for intracellular glutamine, in a similar manner as for L-glutamate. This is Bestrophin-2a from Homo sapiens (Human).